Reading from the N-terminus, the 419-residue chain is Serine hydroxymethyltransferase (419 aa).

Residues L121 and 125-127 contribute to the (6S)-5,6,7,8-tetrahydrofolate site; that span reads GHL. K230 is subject to N6-(pyridoxal phosphate)lysine. A (6S)-5,6,7,8-tetrahydrofolate-binding site is contributed by 355-357; that stretch reads SPF.

This sequence belongs to the SHMT family. As to quaternary structure, homodimer. Pyridoxal 5'-phosphate serves as cofactor.

It localises to the cytoplasm. It carries out the reaction (6R)-5,10-methylene-5,6,7,8-tetrahydrofolate + glycine + H2O = (6S)-5,6,7,8-tetrahydrofolate + L-serine. It functions in the pathway one-carbon metabolism; tetrahydrofolate interconversion. It participates in amino-acid biosynthesis; glycine biosynthesis; glycine from L-serine: step 1/1. Catalyzes the reversible interconversion of serine and glycine with tetrahydrofolate (THF) serving as the one-carbon carrier. This reaction serves as the major source of one-carbon groups required for the biosynthesis of purines, thymidylate, methionine, and other important biomolecules. Also exhibits THF-independent aldolase activity toward beta-hydroxyamino acids, producing glycine and aldehydes, via a retro-aldol mechanism. The protein is Serine hydroxymethyltransferase of Streptococcus uberis (strain ATCC BAA-854 / 0140J).